A 347-amino-acid polypeptide reads, in one-letter code: Dihydroorotase (347 aa).

Zn(2+) is bound by residues histidine 13 and histidine 15. Substrate is bound by residues histidine 15 to arginine 17 and asparagine 41. Zn(2+) contacts are provided by lysine 99, histidine 136, and histidine 174. An N6-carboxylysine modification is found at lysine 99. A substrate-binding site is contributed by histidine 136. Residue leucine 219 participates in substrate binding. Residue aspartate 247 participates in Zn(2+) binding. Aspartate 247 is a catalytic residue. Substrate contacts are provided by histidine 251 and alanine 263.

It belongs to the metallo-dependent hydrolases superfamily. DHOase family. Class II DHOase subfamily. In terms of assembly, homodimer. Requires Zn(2+) as cofactor.

The enzyme catalyses (S)-dihydroorotate + H2O = N-carbamoyl-L-aspartate + H(+). It functions in the pathway pyrimidine metabolism; UMP biosynthesis via de novo pathway; (S)-dihydroorotate from bicarbonate: step 3/3. In terms of biological role, catalyzes the reversible cyclization of carbamoyl aspartate to dihydroorotate. The protein is Dihydroorotase of Rhizobium meliloti (strain 1021) (Ensifer meliloti).